The following is a 1173-amino-acid chain: Eukaryotic translation initiation factor 3 subunit A (1173 aa).

The PCI domain occupies 319-502 (LQRMAAHVLL…NSIYFGTDLT (184 aa)). 2 disordered regions span residues 589-613 (QNNA…LAEQ) and 836-1173 (AAEA…PVQL). Basic and acidic residues-rich tracts occupy residues 836–900 (AAEA…RGGD), 925–1011 (DRNE…EPDS), 1028–1081 (SRDD…DAAP), and 1090–1125 (DAPR…RAPK). Gly residues predominate over residues 1128–1142 (GPSGGTGTAAGGGGN). Basic and acidic residues predominate over residues 1149–1165 (PRDEPAPKRDQPQDKGK).

This sequence belongs to the eIF-3 subunit A family. Component of the eukaryotic translation initiation factor 3 (eIF-3) complex. The eIF-3 complex interacts with pix.

It localises to the cytoplasm. RNA-binding component of the eukaryotic translation initiation factor 3 (eIF-3) complex, which is involved in protein synthesis of a specialized repertoire of mRNAs and, together with other initiation factors, stimulates binding of mRNA and methionyl-tRNAi to the 40S ribosome. The eIF-3 complex specifically targets and initiates translation of a subset of mRNAs involved in cell proliferation. This chain is Eukaryotic translation initiation factor 3 subunit A, found in Drosophila persimilis (Fruit fly).